The following is a 268-amino-acid chain: Chymotrypsin-C (268 aa).

Positions M1–S16 are cleaved as a signal peptide. A propeptide spans C17–R29 (activation peptide). Disulfide bonds link C17–C141, C59–C75, C155–C222, C186–C202, and C212–C243. N25 carries N-linked (GlcNAc...) asparagine glycosylation. A Peptidase S1 domain is found at V30–L268. Active-site charge relay system residues include H74 and D121. The active-site Charge relay system is S216.

This sequence belongs to the peptidase S1 family. Elastase subfamily. Monomer. The zymogen is secreted as a ternary complex composed of procarboxypeptidase A, chymotrypsinogen C and proproteinase E. In terms of tissue distribution, pancreas.

Its subcellular location is the secreted. It is found in the extracellular space. It catalyses the reaction Preferential cleavage: Leu-|-Xaa, Tyr-|-Xaa, Phe-|-Xaa, Met-|-Xaa, Trp-|-Xaa, Gln-|-Xaa, Asn-|-Xaa.. Regulates activation and degradation of trypsinogens and procarboxypeptidases by targeting specific cleavage sites within their zymogen precursors. Has chymotrypsin-type protease activity and hypocalcemic activity. The protein is Chymotrypsin-C (CTRC) of Bos taurus (Bovine).